Reading from the N-terminus, the 620-residue chain is Translation initiation factor IF-2 (620 aa).

The tr-type G domain maps to 119–288; the sequence is ERPPIVTIMG…IILISELENL (170 aa). A G1 region spans residues 128 to 135; that stretch reads GHVDHGKT. Position 128-135 (128-135) interacts with GTP; that stretch reads GHVDHGKT. Positions 153–157 are G2; it reads GITQA. The G3 stretch occupies residues 175 to 178; that stretch reads DTPG. GTP contacts are provided by residues 175–179 and 229–232; these read DTPGH and NKID. The interval 229–232 is G4; it reads NKID. Positions 265 to 267 are G5; that stretch reads SAI.

Belongs to the TRAFAC class translation factor GTPase superfamily. Classic translation factor GTPase family. IF-2 subfamily.

The protein localises to the cytoplasm. One of the essential components for the initiation of protein synthesis. Protects formylmethionyl-tRNA from spontaneous hydrolysis and promotes its binding to the 30S ribosomal subunits. Also involved in the hydrolysis of GTP during the formation of the 70S ribosomal complex. The sequence is that of Translation initiation factor IF-2 from Mycoplasma mycoides subsp. mycoides SC (strain CCUG 32753 / NCTC 10114 / PG1).